Reading from the N-terminus, the 338-residue chain is 4'-phosphopantetheinyl transferase (338 aa).

The protein belongs to the P-Pant transferase superfamily.

The catalysed reaction is apo-[ACP] + CoA = holo-[ACP] + adenosine 3',5'-bisphosphate + H(+). Acyl-carrier-protein synthase that transfers the 4'-phosphopantetheine moiety from coenzyme A to a Ser of an acyl-carrier-protein. The 4'-phosphopantetheine (4'-PPT) portion of CoA provides the essential prosthetic group for a number of carrier proteins and multi-domain enzymes, priming them for the acceptance of acyl building blocks in fatty acid synthesis and many aspects of secondary metabolism mediated by polyketide synthases (PKSs) and non-ribosomal peptide synthetases (NRPSs). Plays a key role in liamocins biosynthesis by activationg the HR-PKS PKS1 that produces 3,5-dihydroxydecanoic acid, a precursor of liamocins. This Aureobasidium melanogenum (Aureobasidium pullulans var. melanogenum) protein is 4'-phosphopantetheinyl transferase.